The following is a 291-amino-acid chain: NAD kinase (291 aa).

The active-site Proton acceptor is aspartate 73. NAD(+) is bound by residues 73 to 74 (DG), 147 to 148 (ND), arginine 175, aspartate 177, 188 to 193 (TAYALS), alanine 212, and glutamine 246.

It belongs to the NAD kinase family. The cofactor is a divalent metal cation.

It localises to the cytoplasm. The enzyme catalyses NAD(+) + ATP = ADP + NADP(+) + H(+). Involved in the regulation of the intracellular balance of NAD and NADP, and is a key enzyme in the biosynthesis of NADP. Catalyzes specifically the phosphorylation on 2'-hydroxyl of the adenosine moiety of NAD to yield NADP. The sequence is that of NAD kinase from Polaromonas naphthalenivorans (strain CJ2).